The chain runs to 191 residues: Apoptosis regulator BHRF1 (191 aa).

The interval 1-18 is interaction with host VRK2; the sequence is MAYSTREILLALCIRDSR. Asn-22 carries N-linked (GlcNAc...) asparagine; by host glycosylation. The BH1 motif lies at 89 to 109; it reads EIFHRGDPSLGRALAWMAWCM. The interval 89–142 is interaction with host VRK2; sequence EIFHRGDPSLGRALAWMAWCMHACRTLCCNQSTPYYVVDLSVRGMLEASEGLDG. The N-linked (GlcNAc...) asparagine; by host glycan is linked to Asn-118. The BH2 signature appears at 142–157; the sequence is GWIHQQGGWSTLIEDN. The helical transmembrane segment at 166–186 threads the bilayer; the sequence is WTLFLAGLTLSLLVICSYLFI.

Belongs to the Bcl-2 family. As to quaternary structure, interacts with isoform 1 of host VRK2; this interaction is involved in protecting cells from apoptosis. Interacts with host PRA1; this interaction seems to modulate BHRF1 anti-apoptotic activity. Interacts with host BCL2L11. Interacts with host BAD and BBC3. Interacts with BALF1; BALF1 acting as a negative regulator of the survival function of BHRF1. Interacts with host BECN1.

Its subcellular location is the host membrane. It is found in the host mitochondrion. Its function is as follows. Prevents premature death of the host cell during virus production, which would otherwise reduce the amount of progeny virus. Acts as a host B-cell leukemia/lymphoma 2 (Bcl-2) homolog, and interacts with pro-apoptotic proteins to prevent mitochondria permeabilization, release of cytochrome c and subsequent apoptosis of the host cell. In addition, plays a role in the inhibiton of host BECN1-mediated starvation-induced autophagy without affecting basal levels of autophagy. In Homo sapiens (Human), this protein is Apoptosis regulator BHRF1.